The sequence spans 607 residues: MQRSRASSTSSGRHPAPPPIGLPQPQAQPLEAPKIIVIHPGSQHLRIGRAADLNPLTLLHAVAYRRRPGASDRPHHDPLLPPLDNVNSNSGLMVEFEEQRLVVSRILQHCVVDNKNRLRVATPPQQLAHFNRSSQAEKVPAPSGQMADEPWLDREAPVLFDDRILRLGAVDARNYDIHFPIQRGELNVHNEKGGSLQASMQHLERIWSYALEERLKIPLRKLGTHCAVLVVNDVYVRRHLREFVTLLLRRLGFRRCFLVQDSVASTFGAGIGYGCVVDIGAQKTSIACIEDGISQLDARVRLSYGGGDLDQVLLLLLRKCGFPYRECNVQESYVDAHLLDELKEKFCHLNASVCGAQEKHFNLRKHNGQWLRYTIQVGDEALMAPLALFHTELLNITGRTKAVFTQQAVQDQYDCEDCFDAEYLKETGRKNGVRGGDILQLSTSAGYQPRPQLPVTADDEELIVVDQDETISNCQSQLGAQTAGGQMNSNGCYHNGQGLVLPLDQAIIQSINRLSSYETKRKMFGSILLVGSSAKLPGLAAWLEQRISQQVQSEVNVLIKGMDAGMVAWKGAAIMSVLESARELWISQNDWQRHGLRVLRERSPFLW.

Residues 1 to 12 (MQRSRASSTSSG) show a composition bias toward polar residues. Residues 1–27 (MQRSRASSTSSGRHPAPPPIGLPQPQA) are disordered. Residue threonine 9 is modified to Phosphothreonine. At serine 11 the chain carries Phosphoserine. 278–281 (DIGA) provides a ligand contact to ATP.

Belongs to the actin family. ARP8 subfamily. Component of the chromatin remodeling Ino80 complex. Exists as monomers and dimers, but the dimer is most probably the biologically relevant form required for stable interactions with histones that exploits the twofold symmetry of the nucleosome core.

It is found in the nucleus. The protein localises to the cytoplasm. It localises to the cytoskeleton. Plays an important role in the functional organization of mitotic chromosomes. Exhibits low basal ATPase activity, and unable to polymerize. Its function is as follows. Proposed core component of the chromatin remodeling INO80 complex which is involved in transcriptional regulation, DNA replication and probably DNA repair. Strongly prefer nucleosomes and H3-H4 tetramers over H2A-H2B dimers, suggesting it may act as a nucleosome recognition module within the complex. The polypeptide is Actin-related protein 8 (Arp8) (Drosophila melanogaster (Fruit fly)).